A 237-amino-acid polypeptide reads, in one-letter code: uncharacterized protein (237 aa).

The tract at residues 1-26 (MKRIRDVLSHENSNNTNYSDTNDTDY) is disordered. Low complexity predominate over residues 12–21 (NSNNTNYSDT).

This sequence belongs to the mimivirus R160 family.

This is an uncharacterized protein from Acanthamoeba polyphaga mimivirus (APMV).